A 2038-amino-acid polypeptide reads, in one-letter code: Homeotic protein female sterile (2038 aa).

A Bromo 1 domain is found at 34 to 140 (RNTNQLQYLI…KVFLQKIESM (107 aa)). Positions 145–284 (LELEPVTAKG…TTAMAGGVGG (140 aa)) are disordered. Low complexity-rich tracts occupy residues 177-209 (GSGTSSAAVTSGPGSGSTKVSVAASSAQQSGLQ) and 268-279 (PGSTNTTTTAMA). A helical transmembrane segment spans residues 330-350 (AAVAAAAAAAAAAAAAAGGAA). Residues 396–432 (KGVKRKADTTTPTANAFESPYTQMDSKSAKIATRRES) are disordered. The segment covering 404–421 (TTTPTANAFESPYTQMDS) has biased composition (polar residues). The chain crosses the membrane as a helical span at residues 451-471 (VSGVPGLGGLVAGGVAGVAVA). A Phosphoserine modification is found at Ser452. One can recognise a Bromo 2 domain in the interval 475-584 (EKLSDALKSC…DVFEMRYANI (110 aa)). Disordered stretches follow at residues 590–655 (ANAA…ERSA) and 677–735 (EASA…SVPG). The span at 593–619 (AHHHGHGHGHGHGHGHGHGHGHGHGHG) shows a compositional bias: basic residues. The span at 636 to 649 (SSEDSSDTENESNS) shows a compositional bias: acidic residues. Basic residues predominate over residues 681–694 (KKKAKKKLKEKKKS). Gly residues predominate over residues 711 to 735 (TGGGANAGGAGGPGSGGHGSVSVPG). Helical transmembrane passes span 750-770 (LNALLGGSLVGHGGAAVAGGV), 790-810 (MAGGGAAAGAGFGAGVTAAGA), and 816-830 (AGTLAGALAAGAAAG). 10 disordered regions span residues 832-858 (GGTTAGSGSSKGAKSKGGRGAKGSGAG), 891-956 (AGAA…SYDE), 1016-1139 (CLRK…GGNL), 1217-1260 (AVSA…ATVA), 1384-1416 (QPAGPQQQQQQQQQQPFGHQQQQQQQQQQQQQQ), 1502-1530 (MQQMQLQQQHHQQQQQQTHQQQQQHQQQH), 1580-1616 (IESMMPSPPDKQQLQQHQKVLPPQQSPSDMKLHPNAA), 1645-1728 (WSSL…VAQA), 1745-1918 (AAAA…SGAI), and 1957-2023 (MESG…GQID). A helical membrane pass occupies residues 874-894 (GAAGAAAGAGSVGGVGGAGAA). The segment covering 910-927 (GAGGGVGGANASAGGAGA) has biased composition (gly residues). Residues 942 to 1024 (DSEEEDTAKP…SCLRKKTHKK (83 aa)) enclose the NET domain. At Ser943 the chain carries Phosphoserine. Residues 1017-1027 (LRKKTHKKPSG) show a composition bias toward basic residues. Basic and acidic residues predominate over residues 1028-1046 (KSKDEQMAEKKQELEKRLQ). A compositionally biased stretch (low complexity) spans 1079 to 1100 (SSSSSSSDSSSSSSSDSSSSDS). Polar residues-rich tracts occupy residues 1121 to 1131 (SNGSNVNNPSI) and 1222 to 1232 (TGQQHNKNGPN). A compositionally biased stretch (low complexity) spans 1645 to 1665 (WSSLASANSPQSHTSSSSSSS). Ser1653 is subject to Phosphoserine. Residues 1680 to 1708 (KAKERDRLKLLEAAEKEKKNQKEAAEKEQ) show a composition bias toward basic and acidic residues. Composition is skewed to low complexity over residues 1716 to 1728 (SSSSLTSAAVAQA) and 1745 to 1760 (AAAAALASSASNPSGG). Residues 1731 to 1751 (IAAATAAAAVTLGAAAAAALA) form a helical membrane-spanning segment. The span at 1776 to 1791 (GDRDRDRDRERERERS) shows a compositional bias: basic and acidic residues. Residues 1800–1813 (NGNNSSNSANSNGP) show a composition bias toward low complexity. Composition is skewed to gly residues over residues 1814-1828 (GSAGSGGSGGGGGSG) and 1835-1856 (PNSGGGGTANSNSGGGGGGGGP). Positions 1857-1884 (ALLNAGSNSNSGVGSGGAASSNSNSSVG) are enriched in low complexity. Over residues 1885–1915 (GIVGSGGPGSNSQGSSGGGGGGPASGGGMGS) the composition is skewed to gly residues. A helical transmembrane segment spans residues 1939-1959 (VAAAVAAQAILAASPLGAMES). 2 positions are modified to phosphoserine: Ser1980 and Ser1988. Residues 1986 to 1997 (QSSPAQQSPQDR) show a composition bias toward low complexity. Over residues 1998-2017 (AAAKRAEQRRAEQERRRREA) the composition is skewed to basic and acidic residues.

The protein localises to the membrane. Functionally, required maternally for proper expression of other homeotic genes involved in pattern formation, such as Ubx. The polypeptide is Homeotic protein female sterile (fs(1)h) (Drosophila melanogaster (Fruit fly)).